The sequence spans 344 residues: Phosphoribosylformylglycinamidine cyclo-ligase (344 aa).

The protein belongs to the AIR synthase family.

It localises to the cytoplasm. The enzyme catalyses 2-formamido-N(1)-(5-O-phospho-beta-D-ribosyl)acetamidine + ATP = 5-amino-1-(5-phospho-beta-D-ribosyl)imidazole + ADP + phosphate + H(+). Its pathway is purine metabolism; IMP biosynthesis via de novo pathway; 5-amino-1-(5-phospho-D-ribosyl)imidazole from N(2)-formyl-N(1)-(5-phospho-D-ribosyl)glycinamide: step 2/2. This is Phosphoribosylformylglycinamidine cyclo-ligase from Anaeromyxobacter sp. (strain Fw109-5).